The primary structure comprises 508 residues: Photosystem II CP47 reaction center protein (508 aa).

Transmembrane regions (helical) follow at residues 21–36, 101–115, 140–156, 203–218, 237–252, and 457–472; these read AVHI…WAGS, IVFS…IWHW, GIHL…FGAF, IAAG…FHLS, VLSS…AFVV, and TFAL…HGAR.

Belongs to the PsbB/PsbC family. PsbB subfamily. PSII is composed of 1 copy each of membrane proteins PsbA, PsbB, PsbC, PsbD, PsbE, PsbF, PsbH, PsbI, PsbJ, PsbK, PsbL, PsbM, PsbT, PsbX, PsbY, PsbZ, Psb30/Ycf12, at least 3 peripheral proteins of the oxygen-evolving complex and a large number of cofactors. It forms dimeric complexes. Binds multiple chlorophylls. PSII binds additional chlorophylls, carotenoids and specific lipids. serves as cofactor.

The protein resides in the plastid. The protein localises to the chloroplast thylakoid membrane. Functionally, one of the components of the core complex of photosystem II (PSII). It binds chlorophyll and helps catalyze the primary light-induced photochemical processes of PSII. PSII is a light-driven water:plastoquinone oxidoreductase, using light energy to abstract electrons from H(2)O, generating O(2) and a proton gradient subsequently used for ATP formation. This Lolium perenne (Perennial ryegrass) protein is Photosystem II CP47 reaction center protein.